A 455-amino-acid chain; its full sequence is Bifunctional protein GlmU (455 aa).

A pyrophosphorylase region spans residues 1–232; that stretch reads MASTTGALIL…DPNLLGVNNP (232 aa). UDP-N-acetyl-alpha-D-glucosamine-binding positions include 10–13, K24, Q75, and 80–81; these read LAAG and GT. A Mg(2+)-binding site is contributed by D106. UDP-N-acetyl-alpha-D-glucosamine-binding residues include G141, E155, N172, and N230. Residue N230 participates in Mg(2+) binding. Residues 233–253 form a linker region; that stretch reads AELIRSEALLRTRLVIGHIEG. The interval 254–455 is N-acetyltransferase; the sequence is GVLIHAPETV…QTNLPRKPKA (202 aa). Residues R336 and K354 each coordinate UDP-N-acetyl-alpha-D-glucosamine. Catalysis depends on H366, which acts as the Proton acceptor. 2 residues coordinate UDP-N-acetyl-alpha-D-glucosamine: Y369 and N380. Acetyl-CoA contacts are provided by residues A383, 389–390, S408, A426, and R443; that span reads NY.

The protein in the N-terminal section; belongs to the N-acetylglucosamine-1-phosphate uridyltransferase family. It in the C-terminal section; belongs to the transferase hexapeptide repeat family. In terms of assembly, homotrimer. It depends on Mg(2+) as a cofactor.

It localises to the cytoplasm. The catalysed reaction is alpha-D-glucosamine 1-phosphate + acetyl-CoA = N-acetyl-alpha-D-glucosamine 1-phosphate + CoA + H(+). It carries out the reaction N-acetyl-alpha-D-glucosamine 1-phosphate + UTP + H(+) = UDP-N-acetyl-alpha-D-glucosamine + diphosphate. It functions in the pathway nucleotide-sugar biosynthesis; UDP-N-acetyl-alpha-D-glucosamine biosynthesis; N-acetyl-alpha-D-glucosamine 1-phosphate from alpha-D-glucosamine 6-phosphate (route II): step 2/2. It participates in nucleotide-sugar biosynthesis; UDP-N-acetyl-alpha-D-glucosamine biosynthesis; UDP-N-acetyl-alpha-D-glucosamine from N-acetyl-alpha-D-glucosamine 1-phosphate: step 1/1. Its pathway is bacterial outer membrane biogenesis; LPS lipid A biosynthesis. In terms of biological role, catalyzes the last two sequential reactions in the de novo biosynthetic pathway for UDP-N-acetylglucosamine (UDP-GlcNAc). The C-terminal domain catalyzes the transfer of acetyl group from acetyl coenzyme A to glucosamine-1-phosphate (GlcN-1-P) to produce N-acetylglucosamine-1-phosphate (GlcNAc-1-P), which is converted into UDP-GlcNAc by the transfer of uridine 5-monophosphate (from uridine 5-triphosphate), a reaction catalyzed by the N-terminal domain. This is Bifunctional protein GlmU from Nitratidesulfovibrio vulgaris (strain DP4) (Desulfovibrio vulgaris).